Here is a 150-residue protein sequence, read N- to C-terminus: Arginine repressor (150 aa).

The protein belongs to the ArgR family.

The protein localises to the cytoplasm. It participates in amino-acid biosynthesis; L-arginine biosynthesis [regulation]. Functionally, regulates arginine biosynthesis genes. This Staphylococcus carnosus (strain TM300) protein is Arginine repressor.